The sequence spans 344 residues: Arginine N-succinyltransferase (344 aa).

L125 serves as a coordination point for succinyl-CoA. The active-site Proton donor is H229.

Belongs to the arginine N-succinyltransferase family.

It catalyses the reaction succinyl-CoA + L-arginine = N(2)-succinyl-L-arginine + CoA + H(+). It functions in the pathway amino-acid degradation; L-arginine degradation via AST pathway; L-glutamate and succinate from L-arginine: step 1/5. Functionally, catalyzes the transfer of succinyl-CoA to arginine to produce N(2)-succinylarginine. The sequence is that of Arginine N-succinyltransferase from Citrobacter koseri (strain ATCC BAA-895 / CDC 4225-83 / SGSC4696).